The primary structure comprises 93 residues: ATP-dependent Clp protease adapter protein ClpS (93 aa).

It belongs to the ClpS family. Binds to the N-terminal domain of the chaperone ClpA.

Its function is as follows. Involved in the modulation of the specificity of the ClpAP-mediated ATP-dependent protein degradation. The polypeptide is ATP-dependent Clp protease adapter protein ClpS (Gloeobacter violaceus (strain ATCC 29082 / PCC 7421)).